The sequence spans 396 residues: Lipid-A-disaccharide synthase (396 aa).

The protein belongs to the LpxB family.

The enzyme catalyses a lipid X + a UDP-2-N,3-O-bis[(3R)-3-hydroxyacyl]-alpha-D-glucosamine = a lipid A disaccharide + UDP + H(+). It participates in bacterial outer membrane biogenesis; LPS lipid A biosynthesis. Functionally, condensation of UDP-2,3-diacylglucosamine and 2,3-diacylglucosamine-1-phosphate to form lipid A disaccharide, a precursor of lipid A, a phosphorylated glycolipid that anchors the lipopolysaccharide to the outer membrane of the cell. The protein is Lipid-A-disaccharide synthase of Hahella chejuensis (strain KCTC 2396).